A 314-amino-acid chain; its full sequence is 4-hydroxy-3-methylbut-2-enyl diphosphate reductase (314 aa).

Cysteine 12 contacts [4Fe-4S] cluster. Residues histidine 41 and histidine 74 each contribute to the (2E)-4-hydroxy-3-methylbut-2-enyl diphosphate site. Positions 41 and 74 each coordinate dimethylallyl diphosphate. Histidine 41 and histidine 74 together coordinate isopentenyl diphosphate. Residue cysteine 96 participates in [4Fe-4S] cluster binding. Residue histidine 124 participates in (2E)-4-hydroxy-3-methylbut-2-enyl diphosphate binding. Histidine 124 lines the dimethylallyl diphosphate pocket. Histidine 124 serves as a coordination point for isopentenyl diphosphate. Catalysis depends on glutamate 126, which acts as the Proton donor. (2E)-4-hydroxy-3-methylbut-2-enyl diphosphate is bound at residue threonine 167. Cysteine 197 lines the [4Fe-4S] cluster pocket. Residues serine 225, serine 226, asparagine 227, and serine 269 each contribute to the (2E)-4-hydroxy-3-methylbut-2-enyl diphosphate site. Dimethylallyl diphosphate-binding residues include serine 225, serine 226, asparagine 227, and serine 269. The isopentenyl diphosphate site is built by serine 225, serine 226, asparagine 227, and serine 269.

Belongs to the IspH family. The cofactor is [4Fe-4S] cluster.

The catalysed reaction is isopentenyl diphosphate + 2 oxidized [2Fe-2S]-[ferredoxin] + H2O = (2E)-4-hydroxy-3-methylbut-2-enyl diphosphate + 2 reduced [2Fe-2S]-[ferredoxin] + 2 H(+). The enzyme catalyses dimethylallyl diphosphate + 2 oxidized [2Fe-2S]-[ferredoxin] + H2O = (2E)-4-hydroxy-3-methylbut-2-enyl diphosphate + 2 reduced [2Fe-2S]-[ferredoxin] + 2 H(+). Its pathway is isoprenoid biosynthesis; dimethylallyl diphosphate biosynthesis; dimethylallyl diphosphate from (2E)-4-hydroxy-3-methylbutenyl diphosphate: step 1/1. It functions in the pathway isoprenoid biosynthesis; isopentenyl diphosphate biosynthesis via DXP pathway; isopentenyl diphosphate from 1-deoxy-D-xylulose 5-phosphate: step 6/6. Catalyzes the conversion of 1-hydroxy-2-methyl-2-(E)-butenyl 4-diphosphate (HMBPP) into a mixture of isopentenyl diphosphate (IPP) and dimethylallyl diphosphate (DMAPP). Acts in the terminal step of the DOXP/MEP pathway for isoprenoid precursor biosynthesis. The polypeptide is 4-hydroxy-3-methylbut-2-enyl diphosphate reductase (Actinobacillus pleuropneumoniae serotype 3 (strain JL03)).